A 298-amino-acid chain; its full sequence is Bifunctional methyltransferase/endonuclease (298 aa).

A probable methylated-DNA--protein-cysteine methyltransferase region spans residues 1–79 (MQSIDLYSYL…SLGIDEKIRR (79 aa)). Residue C56 is part of the active site. Residues 80–298 (LRNDGIEINN…TVALRRNNII (219 aa)) are endonuclease V. Mg(2+) contacts are provided by D137 and D197.

It in the N-terminal section; belongs to the MGMT family. The protein in the C-terminal section; belongs to the endonuclease V family. It depends on Mg(2+) as a cofactor.

The protein resides in the cytoplasm. The catalysed reaction is Endonucleolytic cleavage at apurinic or apyrimidinic sites to products with a 5'-phosphate.. DNA repair enzyme involved in the repair of deaminated bases. Selectively cleaves double-stranded DNA at the second phosphodiester bond 3' to a deoxyinosine leaving behind the intact lesion on the nicked DNA. This Picrophilus torridus (strain ATCC 700027 / DSM 9790 / JCM 10055 / NBRC 100828 / KAW 2/3) protein is Bifunctional methyltransferase/endonuclease.